The following is a 791-amino-acid chain: 1-phosphatidylinositol 4,5-bisphosphate phosphodiesterase delta-4 (791 aa).

In terms of domain architecture, PH spans 16–124 (LLMQKGTMMR…WMQGLQLLVG (109 aa)). Residues 26 to 53 (KVRSKSWKKLRFFRLQDDGMTVWHARQA) form a substrate binding region. EF-hand domains are found at residues 134-169 (RLDQ…MNVE), 170-205 (MDQE…LTQR), and 207-237 (EVQE…EQKE). Asp147, Asn149, Asp151, Arg153, Glu158, Asp183, Ser185, Ser187, Thr189, and Glu194 together coordinate Ca(2+). Residues 213–243 (EKFSSDGQKLTLLEFVDFLQEEQKEGERASD) carry the GBA motif. One can recognise a PI-PLC X-box domain in the interval 290–435 (QDMTQPLNHY…LRGKILVKGK (146 aa)). Residue His305 is part of the active site. Ca(2+) is bound by residues Asn306, Glu335, and Asp337. The active site involves His350. Glu384 provides a ligand contact to Ca(2+). Lys433, Lys435, Ser551, and Arg578 together coordinate substrate. In terms of domain architecture, PI-PLC Y-box spans 522–638 (LSALVVYLKA…GYVLKPDFLR (117 aa)). One can recognise a C2 domain in the interval 638-765 (RDAQSSFHPE…QGYRHIHLLS (128 aa)). 6 residues coordinate Ca(2+): Ile679, Asp681, Asn705, Asp734, Tyr735, and Asp736. Residues 760–763 (HIHL) carry the PDZ-binding motif.

Interacts with GRIP1. Interacts (via GBA motif) with guanine nucleotide-binding protein G(i) alpha subunit GNAI3 (inactive GDP-bound form); low-affinity interaction. Ca(2+) serves as cofactor.

The protein localises to the membrane. It localises to the nucleus. The protein resides in the cytoplasm. It is found in the endoplasmic reticulum. The catalysed reaction is a 1,2-diacyl-sn-glycero-3-phospho-(1D-myo-inositol-4,5-bisphosphate) + H2O = 1D-myo-inositol 1,4,5-trisphosphate + a 1,2-diacyl-sn-glycerol + H(+). The enzyme catalyses a 1,2-diacyl-sn-glycero-3-phospho-(1D-myo-inositol) + H2O = 1D-myo-inositol 1-phosphate + a 1,2-diacyl-sn-glycerol + H(+). Functionally, hydrolyzes the phosphatidylinositol 4,5-bisphosphate (PIP2) to generate 2 second messenger molecules diacylglycerol (DAG) and inositol 1,4,5-trisphosphate (IP3). DAG mediates the activation of protein kinase C (PKC), while IP3 releases Ca(2+) from intracellular stores. Required for acrosome reaction in sperm during fertilization, probably by acting as an important enzyme for intracellular Ca(2+) mobilization in the zona pellucida-induced acrosome reaction. May play a role in cell growth. Modulates the liver regeneration in cooperation with nuclear PKC. Overexpression up-regulates the Erk signaling pathway and proliferation. The protein is 1-phosphatidylinositol 4,5-bisphosphate phosphodiesterase delta-4 (PLCD4) of Bos taurus (Bovine).